The primary structure comprises 111 residues: Prefoldin subunit 2 (111 aa).

Coiled-coil stretches lie at residues M1 to H36 and L72 to Q92.

The protein belongs to the prefoldin subunit beta family. Heterohexamer of two PFD-alpha type and four PFD-beta type subunits.

It is found in the cytoplasm. Binds specifically to cytosolic chaperonin (c-CPN) and transfers target proteins to it. Binds to nascent polypeptide chain and promotes folding in an environment in which there are many competing pathways for nonnative proteins. This is Prefoldin subunit 2 (GIM4) from Saccharomyces cerevisiae (strain ATCC 204508 / S288c) (Baker's yeast).